We begin with the raw amino-acid sequence, 312 residues long: DNA-directed RNA polymerase subunit alpha (312 aa).

The segment at 1-226 is alpha N-terminal domain (alpha-NTD); the sequence is MIEFKKPNIT…EHFKAFESAD (226 aa). The alpha C-terminal domain (alpha-CTD) stretch occupies residues 243-312; it reads KEKKLEMTIE…DLGLSLRQED (70 aa).

This sequence belongs to the RNA polymerase alpha chain family. In terms of assembly, homodimer. The RNAP catalytic core consists of 2 alpha, 1 beta, 1 beta' and 1 omega subunit. When a sigma factor is associated with the core the holoenzyme is formed, which can initiate transcription.

It carries out the reaction RNA(n) + a ribonucleoside 5'-triphosphate = RNA(n+1) + diphosphate. In terms of biological role, DNA-dependent RNA polymerase catalyzes the transcription of DNA into RNA using the four ribonucleoside triphosphates as substrates. The sequence is that of DNA-directed RNA polymerase subunit alpha from Lactobacillus delbrueckii subsp. bulgaricus (strain ATCC BAA-365 / Lb-18).